Here is a 409-residue protein sequence, read N- to C-terminus: Palmitoyltransferase ZDHHC23 (409 aa).

Residues 1 to 87 (MTQKGSMKPV…RIPWLRGAKK (87 aa)) lie on the Cytoplasmic side of the membrane. A helical membrane pass occupies residues 88–106 (VNISIIPPLVLLPVFLHVA). Topologically, residues 107–109 (SWH) are lumenal. The helical transmembrane segment at 110–132 (FLLGVVVLTSLPVLALWYYYLTH) threads the bilayer. Topologically, residues 133–136 (RRKE) are cytoplasmic. The helical transmembrane segment at 137-157 (QTLFFLSLGLFSLGYMYYVFL) threads the bilayer. Over 158 to 165 (QEVVPKGR) the chain is Lumenal. Residues 166–186 (VGPVQLAVLTCGLFLILLALH) traverse the membrane as a helical segment. The Cytoplasmic portion of the chain corresponds to 187-302 (RAKKNPGYLS…NSCVGESNHQ (116 aa)). The interval 215-255 (RKGQEKTKGFPGADMSGSLNNRTTKDDPKGSSKMPAGSPTK) is disordered. Residues 259 to 309 (DWCAKCQLVRPARAWHCRICGICVRRMDHHCVWINSCVGESNHQAFILALL) enclose the DHHC domain. Residue Cys-289 is the S-palmitoyl cysteine intermediate of the active site. A helical transmembrane segment spans residues 303–323 (AFILALLIFLLTSVYGITLTL). Residues 324–331 (DTICRDRS) lie on the Lumenal side of the membrane. Residues 332–352 (VFTALFYCPGVYANYSSALSF) traverse the membrane as a helical segment. Residue Thr-353 is a topological domain, cytoplasmic. The chain crosses the membrane as a helical span at residues 354 to 374 (CVWYSVIITAGMAYIFLIQLI). The Lumenal portion of the chain corresponds to 375–409 (NISYNVTEREVQQALRQKTGRRLLCGLIVDTGLLG).

Belongs to the DHHC palmitoyltransferase family. Interacts with NOS1.

The protein resides in the golgi apparatus membrane. It is found in the golgi apparatus. The protein localises to the trans-Golgi network membrane. The catalysed reaction is L-cysteinyl-[protein] + hexadecanoyl-CoA = S-hexadecanoyl-L-cysteinyl-[protein] + CoA. Palmitoyltransferase that could catalyze the addition of palmitate onto various protein substrates and be involved in a variety of cellular processes. Palmitoyltransferase that mediates palmitoylation of KCNMA1, regulating localization of KCNMA1 to the plasma membrane. May be involved in NOS1 regulation and targeting to the synaptic membrane. The chain is Palmitoyltransferase ZDHHC23 from Homo sapiens (Human).